The sequence spans 157 residues: Probable succinate transporter subunit YjjB (157 aa).

The next 4 membrane-spanning stretches (helical) occupy residues 8-28 (LALA…AMVF), 50-70 (MILM…SMLV), 87-107 (VFTV…TAMI), and 129-149 (FLTA…PGLW).

It belongs to the ThrE exporter (TC 2.A.79) family. In terms of assembly, the transporter is composed of YjjB and YjjP.

The protein localises to the cell inner membrane. In terms of biological role, involved in succinate export with YjjP. Both proteins are required for export. This Shigella flexneri serotype 5b (strain 8401) protein is Probable succinate transporter subunit YjjB.